A 700-amino-acid polypeptide reads, in one-letter code: MAGMAAALAKERAAAAGAGRHGQAVPYLGQDFGALRRECLQGGRLFHDPSFPAGPAALGYRELGPNSYKTKGVVWCRPTELCSCPRFIAGGATRTDICQGALGDCWLLAAIASLTLNEEILARVVPRDQSFQDEYAGIFHFQFWQYGEWVDVVVDDRLPTKNGELLFVHSAEGSEFWSALLEKAYAKLNGSYEALSGGTTTEGFEDFTGGIAEWYELQKAPPNLFKIIQKALQKGSLLGCSIDITSAAETEAVTSQKLVKGHAYSVTGAEEVNFRGSIQKLIRIRNPWGEVEWTGKWNDNCPNWSGVDPEVRERLTRRHEDGEFWMAFNDFLRHYSRLEICNLTPDTLASDRYKKWSLLKLDGNWRRGATAGGCRNYPNTFWTNPQYLIKLEEEDEDPDDPEGGCTFLIGLIQKHRRKQRKMGEDMHTIGFAIYEVPPEFSGQTNIHLSKNFFLTNKAREKSNTFINLREVLNRFKLPAGEYIIVPSTFEPNLNGDFCLRVFSEKNANSTVIDDEIEANFEETEIDEDDIEPSFKKLFGQLAGSDAEISAFELRSILNKILAKRQDIKSDGFSIETCKIMVDLLDNDGSGKLGLKEFHTLWTKIQKYQKIYREIDVDRSGTMNSYEMRRALEAAGFKLSCQLHQIIVARFADEDLIIDFDNCVRCLIRLETLYKMFRKLDTEKTGTIELNLINWLFFTVI.

The propeptide at 2–19 is anchors to the small subunit; it reads AGMAAALAKERAAAAGAG. The Calpain catalytic domain occupies 45 to 344; sequence LFHDPSFPAG…YSRLEICNLT (300 aa). Residues Gly-91 and Asp-96 each contribute to the Ca(2+) site. Cys-105 is an active-site residue. Residues Glu-175, Gln-229, and Lys-230 each coordinate Ca(2+). Residues His-262 and Asn-286 contribute to the active site. Residues Glu-292, Asp-299, and Glu-323 each coordinate Ca(2+). The segment at 345 to 514 is domain III; sequence PDTLASDRYK…KNANSTVIDD (170 aa). A linker region spans residues 515–529; that stretch reads EIEANFEETEIDEDD. Residues 530–700 are domain IV; that stretch reads IEPSFKKLFG…LINWLFFTVI (171 aa). Positions 542, 545, 547, 552, 585, 587, 589, 591, 596, 615, 617, 619, 621, 626, 658, and 661 each coordinate Ca(2+). 2 consecutive EF-hand domains span residues 572-605 and 602-637; these read FSIE…TKIQ and TKIQ…AGFK. Positions 667–700 constitute an EF-hand 3 domain; the sequence is IRLETLYKMFRKLDTEKTGTIELNLINWLFFTVI.

Belongs to the peptidase C2 family. As to quaternary structure, forms a heterodimer with a small (regulatory) subunit (CAPNS1). Requires Ca(2+) as cofactor. In terms of tissue distribution, ubiquitous.

It localises to the cytoplasm. The protein resides in the cell membrane. It carries out the reaction Broad endopeptidase specificity.. Its activity is regulated as follows. Activated by 200-1000 micromolar concentrations of calcium and inhibited by calpastatin. Its function is as follows. Calcium-regulated non-lysosomal thiol-protease which catalyze limited proteolysis of substrates involved in cytoskeletal remodeling and signal transduction. This chain is Calpain-2 catalytic subunit (CAPN2), found in Gallus gallus (Chicken).